Here is a 342-residue protein sequence, read N- to C-terminus: uncharacterized protein (342 aa).

Arginine 69 contributes to the substrate binding site. Residue histidine 176 is the Proton donor of the active site. Aspartate 240 lines the substrate pocket.

This sequence belongs to the aldose epimerase family.

This is an uncharacterized protein from Saccharomyces cerevisiae (strain ATCC 204508 / S288c) (Baker's yeast).